Consider the following 385-residue polypeptide: Isocitrate dehydrogenase [NAD] subunit beta, mitochondrial (385 aa).

Residues 1 to 34 (MAALSGVRWLTRALVSAGNPGAWRGLSTSAAAHA) constitute a mitochondrion transit peptide. K199 is subject to N6-acetyllysine.

The protein belongs to the isocitrate and isopropylmalate dehydrogenases family. Heterooligomer of subunits alpha (IDH3A), beta (IDH3B), and gamma (IDH3G) in the apparent ratio of 2:1:1. The heterodimer containing one IDH3A and one IDH3B subunit and the heterodimer containing one IDH3A and one IDH3G subunit assemble into a heterotetramer (which contains two subunits of IDH3A, one of IDH3B and one of IDH3G) and further into the heterooctamer.

The protein localises to the mitochondrion. The heterotetramer and the heterodimer composed of IDH3A and IDH3G subunits can be allosterically activated by citrate (CIT) or/and ADP, and the two activators can act independently or synergistically. The heterodimer composed of IDH3A and IDH3B subunits cannot be allosterically regulated and the allosteric regulation of the heterotetramer is through the IDH3G subunit and not the IDH3B subunit. The IDH3G subunit contains the allosteric site which consists of a CIT-binding site and an ADP-binding site, and the binding of CIT and ADP causes conformational changes at the allosteric site which are transmitted to the active site in the catalytic subunit (IDH3A) through a cascade of conformational changes at the heterodimer interface, leading to stabilization of the isocitrate-binding at the active site and thus activation of the enzyme. ATP can activate the heterotetramer and the heterodimer composed of IDH3A and IDH3G subunits at low concentrations but inhibits their activities at high concentrations, whereas ATP exhibits only inhibitory effect on the heterodimer composed of IDH3A and IDH3B subunits. Plays a structural role to facilitate the assembly and ensure the full activity of the enzyme catalyzing the decarboxylation of isocitrate (ICT) into alpha-ketoglutarate. The heterodimer composed of the alpha (IDH3A) and beta (IDH3B) subunits and the heterodimer composed of the alpha (IDH3A) and gamma (IDH3G) subunits, have considerable basal activity but the full activity of the heterotetramer (containing two subunits of IDH3A, one of IDH3B and one of IDH3G) requires the assembly and cooperative function of both heterodimers. The polypeptide is Isocitrate dehydrogenase [NAD] subunit beta, mitochondrial (IDH3B) (Macaca fascicularis (Crab-eating macaque)).